We begin with the raw amino-acid sequence, 475 residues long: Bifunctional protein HldE (475 aa).

Positions 1 to 318 (MKITLPEFGK…ANALYTEQET (318 aa)) are ribokinase. 195–198 (NMSE) is a binding site for ATP. Asp-264 is an active-site residue. Residues 344–475 (MTNGCFDILH…DIIKTIRERG (132 aa)) are cytidylyltransferase.

This sequence in the N-terminal section; belongs to the carbohydrate kinase PfkB family. In the C-terminal section; belongs to the cytidylyltransferase family. Homodimer.

The enzyme catalyses D-glycero-beta-D-manno-heptose 7-phosphate + ATP = D-glycero-beta-D-manno-heptose 1,7-bisphosphate + ADP + H(+). It catalyses the reaction D-glycero-beta-D-manno-heptose 1-phosphate + ATP + H(+) = ADP-D-glycero-beta-D-manno-heptose + diphosphate. It participates in nucleotide-sugar biosynthesis; ADP-L-glycero-beta-D-manno-heptose biosynthesis; ADP-L-glycero-beta-D-manno-heptose from D-glycero-beta-D-manno-heptose 7-phosphate: step 1/4. It functions in the pathway nucleotide-sugar biosynthesis; ADP-L-glycero-beta-D-manno-heptose biosynthesis; ADP-L-glycero-beta-D-manno-heptose from D-glycero-beta-D-manno-heptose 7-phosphate: step 3/4. Its function is as follows. Catalyzes the phosphorylation of D-glycero-D-manno-heptose 7-phosphate at the C-1 position to selectively form D-glycero-beta-D-manno-heptose-1,7-bisphosphate. Catalyzes the ADP transfer from ATP to D-glycero-beta-D-manno-heptose 1-phosphate, yielding ADP-D-glycero-beta-D-manno-heptose. The chain is Bifunctional protein HldE from Aeromonas salmonicida (strain A449).